The following is a 570-amino-acid chain: Glutamate--tRNA ligase, chloroplastic/mitochondrial (570 aa).

The N-terminal 39 residues, M1–F39, are a transit peptide targeting the chloroplast and mitochondrion. R57–A59 contacts L-glutamate. Positions P60–G70 match the 'HIGH' region motif. H67 is a binding site for ATP. Residues E93, Y245–V249, and R263 each bind L-glutamate. ATP contacts are provided by residues E266 and K301–R305. Positions K301 to R305 match the 'KMSKS' region motif.

It belongs to the class-I aminoacyl-tRNA synthetase family. Glutamate--tRNA ligase type 1 subfamily.

It is found in the plastid. The protein localises to the chloroplast. The protein resides in the mitochondrion. It catalyses the reaction tRNA(Glu) + L-glutamate + ATP = L-glutamyl-tRNA(Glu) + AMP + diphosphate. Its function is as follows. Catalyzes the attachment of glutamate to tRNA(Glu) in a two-step reaction: glutamate is first activated by ATP to form Glu-AMP and then transferred to the acceptor end of tRNA(Glu). The chain is Glutamate--tRNA ligase, chloroplastic/mitochondrial from Arabidopsis thaliana (Mouse-ear cress).